Reading from the N-terminus, the 664-residue chain is Protein IQ-DOMAIN 28 (664 aa).

Residues 1–85 (MGKTPGKWIK…DESKDNLESR (85 aa)) form a disordered region. Residues 51–64 (VDPPVVSSQPVPAS) are compositionally biased toward low complexity. The span at 76–85 (DESKDNLESR) shows a compositional bias: basic and acidic residues. 3 IQ domains span residues 93 to 121 (LEQA…GIIR), 122 to 140 (LQAV…ATYS), and 144 to 170 (GIVK…QKKH). The tract at residues 106–116 (AHQARRAFRTL) is calmodulin-binding. Disordered stretches follow at residues 244 to 488 (EIPK…KEKD), 502 to 573 (DEKS…SGRK), and 637 to 664 (AKGS…DWKR). The short motif at 251-258 (KKRNYQAV) is the Nuclear localization signal 1 element. Positions 305–315 (DPLRNESDKAN) are enriched in basic and acidic residues. Positions 339–353 (SPSLKRSSLSNGSKK) are enriched in low complexity. Residues 351–358 (SKKATLRS) carry the Nuclear localization signal 2 motif. 3 stretches are compositionally biased toward basic and acidic residues: residues 358–367 (SAEKKKKDIP), 427–447 (TEKE…KVLE), and 502–532 (DEKS…KCAD). Residues 536–547 (SSENGNVGSDNT) are compositionally biased toward polar residues. Basic and acidic residues predominate over residues 652-664 (DITHKSTRTDWKR).

It belongs to the IQD family. In terms of assembly, binds to multiple calmodulin (CaM) in the presence of Ca(2+) and CaM-like proteins.

It is found in the nucleus. The protein localises to the cytoplasm. Its subcellular location is the cytoskeleton. In terms of biological role, may be involved in cooperative interactions with calmodulins or calmodulin-like proteins. Recruits calmodulin proteins to microtubules, thus being a potential scaffold in cellular signaling and trafficking. May associate with nucleic acids and regulate gene expression at the transcriptional or post-transcriptional level. This is Protein IQ-DOMAIN 28 from Arabidopsis thaliana (Mouse-ear cress).